Here is a 438-residue protein sequence, read N- to C-terminus: Transposon Ty2-GR1 Gag polyprotein (438 aa).

3 stretches are compositionally biased toward polar residues: residues 1-11 (MESQQLHQNPH), 19-39 (ASVTSKEVPSNQDPLAVSASN), and 49-60 (KVNSQQETTPGT). Disordered regions lie at residues 1–86 (MESQ…GQYQ), 360–403 (HSEY…ATSS), and 418–438 (VSSQYLSDDDELSLRPATERI). The interval 295–397 (ENNINVSDRL…SSKPRAAKAH (103 aa)) is RNA-binding. The span at 369–381 (TSPNTTNTKVTTR) shows a compositional bias: low complexity.

As to quaternary structure, homotrimer.

The protein resides in the cytoplasm. In terms of biological role, capsid protein (CA) is the structural component of the virus-like particle (VLP), forming the shell that encapsulates the retrotransposons dimeric RNA genome. The particles are assembled from trimer-clustered units and there are holes in the capsid shells that allow for the diffusion of macromolecules. CA also has nucleocapsid-like chaperone activity, promoting primer tRNA(i)-Met annealing to the multipartite primer-binding site (PBS), dimerization of Ty2 RNA and initiation of reverse transcription. The chain is Transposon Ty2-GR1 Gag polyprotein (TY2A-GR1) from Saccharomyces cerevisiae (strain ATCC 204508 / S288c) (Baker's yeast).